The primary structure comprises 141 residues: Transcription antitermination protein NusB (141 aa).

The protein belongs to the NusB family.

In terms of biological role, involved in transcription antitermination. Required for transcription of ribosomal RNA (rRNA) genes. Binds specifically to the boxA antiterminator sequence of the ribosomal RNA (rrn) operons. The chain is Transcription antitermination protein NusB from Treponema pallidum (strain Nichols).